The primary structure comprises 240 residues: 1-(5-phosphoribosyl)-5-[(5-phosphoribosylamino)methylideneamino] imidazole-4-carboxamide isomerase (240 aa).

D8 acts as the Proton acceptor in catalysis. Residue D129 is the Proton donor of the active site.

This sequence belongs to the HisA/HisF family.

The protein localises to the cytoplasm. It carries out the reaction 1-(5-phospho-beta-D-ribosyl)-5-[(5-phospho-beta-D-ribosylamino)methylideneamino]imidazole-4-carboxamide = 5-[(5-phospho-1-deoxy-D-ribulos-1-ylimino)methylamino]-1-(5-phospho-beta-D-ribosyl)imidazole-4-carboxamide. The protein operates within amino-acid biosynthesis; L-histidine biosynthesis; L-histidine from 5-phospho-alpha-D-ribose 1-diphosphate: step 4/9. The sequence is that of 1-(5-phosphoribosyl)-5-[(5-phosphoribosylamino)methylideneamino] imidazole-4-carboxamide isomerase from Herpetosiphon aurantiacus (strain ATCC 23779 / DSM 785 / 114-95).